Reading from the N-terminus, the 337-residue chain is Pseudouridine-5'-phosphate glycosidase (337 aa).

Catalysis depends on Glu26, which acts as the Proton donor. 2 residues coordinate substrate: Lys87 and Val107. Mn(2+) is bound at residue Asp139. 141–143 (SAD) contacts substrate. Catalysis depends on Lys160, which acts as the Nucleophile. The segment covering 306–325 (SSGPQAGAGAPGAEPGPARR) has biased composition (low complexity). The disordered stretch occupies residues 306–337 (SSGPQAGAGAPGAEPGPARRTSPARAPSGEGW).

Belongs to the pseudouridine-5'-phosphate glycosidase family. Homotrimer. Mn(2+) is required as a cofactor.

The enzyme catalyses D-ribose 5-phosphate + uracil = psi-UMP + H2O. Its function is as follows. Catalyzes the reversible cleavage of pseudouridine 5'-phosphate (PsiMP) to ribose 5-phosphate and uracil. Functions biologically in the cleavage direction, as part of a pseudouridine degradation pathway. In Methylobacterium nodulans (strain LMG 21967 / CNCM I-2342 / ORS 2060), this protein is Pseudouridine-5'-phosphate glycosidase.